The primary structure comprises 432 residues: MVTLKRLLAWISDLRIAIGLLFVIALSSALGTAIPQGELRDSYLEGYSDKPWLGFVNGSMILRLQLDHVYTSSWFLALLAWLGLALILCSWRRQWPALQAALQWIDYQEPRQLSKLAIAETISSPPKNESIDKLAAHLHQQGWQVQQQPGRLAARRGIIGRVGPMLVHLGLVLLMLGAVWGSLGGNRLEQFLAPGRSLDLLNRDGNSHLKLTLTNFGIERDPAGRPEQFRSQLELLEPGQDTAKLHEVSVNHPLRFHGLTVYQADWSLAAITLQLGRSPLLQLPLRTFPELGEQVWGLVLPTNPDGSEPVLLSLTSEAGPVQVFDATGERLASLRPAGPTAEVKGIPIRVVEVLPASGLLLKRDPGVPLVYIGFLITLVGGGLSMIATRQLWAVGDPENECLHVGGLCNRNLTGFANELPSLLASITPASQH.

The next 3 helical transmembrane spans lie at 14–34, 72–92, and 162–182; these read LRIA…GTAI, SSWF…CSWR, and VGPM…VWGS.

The protein belongs to the Ccs1/CcsB family. As to quaternary structure, may interact with CcsA.

It is found in the cellular thylakoid membrane. Its function is as follows. Required during biogenesis of c-type cytochromes (cytochrome c6 and cytochrome f) at the step of heme attachment. The chain is Cytochrome c biogenesis protein CcsB from Prochlorococcus marinus (strain MIT 9303).